Here is a 173-residue protein sequence, read N- to C-terminus: MPRTQNKDNFIDKTFTVMADLIVKMMPINDKAKRAYVYYRDGLSAQNAGDYAEALENYEESLKLEESPFDRSETLKNMAIIYMSNGDEDLALDTYQRALDQNSNQPSCLKNMGLIYEKRGRTAQEAGLQDEADQLFDRAADVWTQAVRLYPGGYLDIENWLKTTGRSNIDVYF.

TPR repeat units lie at residues 35–68 (AYVY…EESP), 72–105 (SETL…NSNQ), and 120–153 (GRTA…YPGG).

The protein belongs to the Ycf3 family.

It is found in the cellular thylakoid membrane. In terms of biological role, essential for the assembly of the photosystem I (PSI) complex. May act as a chaperone-like factor to guide the assembly of the PSI subunits. This is Photosystem I assembly protein Ycf3 from Prochlorococcus marinus (strain MIT 9303).